The chain runs to 770 residues: Semaphorin-4F (770 aa).

A signal peptide spans Met1 to Gly34. Over Arg35 to Val659 the chain is Extracellular. The Sema domain maps to Arg42 to Thr510. Asn64 carries N-linked (GlcNAc...) asparagine glycosylation. A disulfide bridge links Cys112 with Cys122. N-linked (GlcNAc...) asparagine glycosylation occurs at Asn133. Disulfide bonds link Cys140-Cys149, Cys273-Cys384, and Cys297-Cys343. An N-linked (GlcNAc...) asparagine glycan is attached at Asn509. Residues Asn512–Pro563 form the PSI domain. 3 disulfides stabilise this stretch: Cys513-Cys530, Cys522-Cys539, and Cys587-Cys628. In terms of domain architecture, Ig-like C2-type spans Ala580–Ala635. The helical transmembrane segment at Gly660–Ile680 threads the bilayer. Residues Gly681 to Ile770 are Cytoplasmic-facing. The disordered stretch occupies residues Asp696–Arg725. Residues Ser718 and Ser720 each carry the phosphoserine modification. The short motif at Thr768–Ile770 is the PDZ-binding element.

It belongs to the semaphorin family. Interacts (via PDZ-binding motif) with DLG4/SAP90 (via PDZ domain 2); this interaction may promote translocation of DLG4/SAP90 to the membrane.

The protein localises to the cell membrane. It localises to the postsynaptic density. It is found in the perikaryon. The protein resides in the cell projection. Its subcellular location is the dendrite. Functionally, probable cell surface receptor that regulates oligodendroglial precursor cell migration. Might also regulate differentiation of oligodendroglial precursor cells. Has growth cone collapse activity against retinal ganglion-cell axons. The polypeptide is Semaphorin-4F (SEMA4F) (Homo sapiens (Human)).